Here is an 81-residue protein sequence, read N- to C-terminus: Short neurotoxin 2 (81 aa).

The first 21 residues, 1 to 21 (MKTLLLTLVVVTIVCLDLGYT), serve as a signal peptide directing secretion. Disulfide bonds link Cys24/Cys43, Cys38/Cys60, Cys62/Cys73, and Cys74/Cys79.

This sequence belongs to the three-finger toxin family. Short-chain subfamily. Type I alpha-neurotoxin sub-subfamily. Expressed by the venom gland.

It localises to the secreted. Functionally, binds to muscle nicotinic acetylcholine receptor (nAChR) and inhibit acetylcholine from binding to the receptor, thereby impairing neuromuscular transmission. The sequence is that of Short neurotoxin 2 from Cryptophis nigrescens (Eastern small-eyed snake).